The primary structure comprises 433 residues: MSVLLLEAFYGGSHKQLLDLLKESVEDCVSFTLPAKKWHWRARTSALYFMQAVPANSSYRVLFTSSVLNLAELVALRPDLGHLKKVLYFHENQLVYPVRKSQERDFQYGYNQILSCLVADVVVFNSSFNMESFLSSISTFMKTMPDHRPKDLERLIRPKCHVLHFPIRFPDVTRFLPAHKRLRHPVRCDDIHAPAAKSHIQTSSPSSYPDVEPPEKMLNVAGTNQSHEPTSVTPHQETASPLCGHEGEKLRPLHIVWPHRWEHDKDPQLFFQTLLKLKDRQLSFEVSVLGETFTDVPDIFSEAKEQLVDHIQHWGFMPSKEDYLKVLCQADVVVSTAKHEFFGVAMLEAVHCGCYPLCPKALVYPEIFPATYLYSTPEQLCKRLQEFCKRPQLARQHVVQVSLSSFSWDSLGDNFRSLLKADSGRMFTDKHMA.

A disordered region spans residues 194–244 (PAAKSHIQTSSPSSYPDVEPPEKMLNVAGTNQSHEPTSVTPHQETASPLCG). Over residues 221–239 (AGTNQSHEPTSVTPHQETA) the composition is skewed to polar residues.

This sequence belongs to the glycosyltransferase group 1 family. Glycosyltransferase 4 subfamily.

Its subcellular location is the cytoplasm. The protein localises to the nucleus. It catalyses the reaction queuosine(34) in tRNA(Asp) + GDP-alpha-D-mannose = O-4''-alpha-D-mannosylqueuosine(34) in tRNA(Asp) + GDP + H(+). Glycosyltransferase that specifically catalyzes mannosylation of cytoplasmic tRNA(Asp) modified with queuosine at position 34 (queuosine(34)). Mannosylates the cyclopentene moiety of queuosine(34) in tRNA(Asp) to form mannosyl-queuosine(34). Mannosylation of queuosine(34) in tRNA(Asp) is required to slow-down elongation at cognate codons, GAC and GAU, thereby regulating protein translation. The protein is tRNA-queuosine alpha-mannosyltransferase (gtdc1) of Danio rerio (Zebrafish).